The chain runs to 228 residues: MQKLKQQVFEANMDLPRYGLVTFTWGNVSAIDRERGLVVIKPSGVAYETMKADDMVVVDMSGKVVEGEYRPSSDTATHLELYRRYPSLGGIVHTHSTHATAWAQAGLAIPALGTTHADYFFGDIPCTRGLSEEEVQGEYELNTGKVIIETLGNAEPLHTPGIVVYQHGPFAWGKDAHDAVHNAVVMEEVAKMAWIARSINPQLNHIDSYLMNKHFMRKHGPNAYYGQK.

Substrate contacts are provided by residues 26–27 (GN), 43–44 (SG), and 72–73 (SS). Residues aspartate 74, histidine 93, and histidine 95 each contribute to the Zn(2+) site. The active-site Proton donor/acceptor is the aspartate 118. Histidine 167 provides a ligand contact to Zn(2+). The Proton donor/acceptor role is filled by tyrosine 225.

The protein belongs to the aldolase class II family. AraD/FucA subfamily. It depends on Zn(2+) as a cofactor.

The catalysed reaction is L-ribulose 5-phosphate = D-xylulose 5-phosphate. It functions in the pathway cofactor degradation; L-ascorbate degradation; D-xylulose 5-phosphate from L-ascorbate: step 4/4. Its function is as follows. Catalyzes the isomerization of L-ribulose 5-phosphate to D-xylulose 5-phosphate. Is involved in the anaerobic L-ascorbate utilization. This Shigella flexneri protein is L-ribulose-5-phosphate 4-epimerase UlaF.